The sequence spans 242 residues: Ribosomal RNA small subunit methyltransferase G (242 aa).

Residues glycine 82, phenylalanine 87, 133 to 134 (AE), and arginine 152 contribute to the S-adenosyl-L-methionine site.

This sequence belongs to the methyltransferase superfamily. RNA methyltransferase RsmG family.

The protein localises to the cytoplasm. In terms of biological role, specifically methylates the N7 position of a guanine in 16S rRNA. The sequence is that of Ribosomal RNA small subunit methyltransferase G from Acetivibrio thermocellus (strain ATCC 27405 / DSM 1237 / JCM 9322 / NBRC 103400 / NCIMB 10682 / NRRL B-4536 / VPI 7372) (Clostridium thermocellum).